The sequence spans 330 residues: Methionyl-tRNA formyltransferase (330 aa).

112 to 115 is a binding site for (6S)-5,6,7,8-tetrahydrofolate; the sequence is SLLP.

It belongs to the Fmt family.

The enzyme catalyses L-methionyl-tRNA(fMet) + (6R)-10-formyltetrahydrofolate = N-formyl-L-methionyl-tRNA(fMet) + (6S)-5,6,7,8-tetrahydrofolate + H(+). Functionally, attaches a formyl group to the free amino group of methionyl-tRNA(fMet). The formyl group appears to play a dual role in the initiator identity of N-formylmethionyl-tRNA by promoting its recognition by IF2 and preventing the misappropriation of this tRNA by the elongation apparatus. The protein is Methionyl-tRNA formyltransferase of Alcanivorax borkumensis (strain ATCC 700651 / DSM 11573 / NCIMB 13689 / SK2).